The chain runs to 470 residues: Trigger factor (470 aa).

A PPIase FKBP-type domain is found at 164–243 (GDYVVIDMTA…VTAVKVQELP (80 aa)). Composition is skewed to acidic residues over residues 424-438 (ETDA…ESVE) and 445-470 (AEDD…AAKA). A disordered region spans residues 424 to 470 (ETDAEDAAEGVESVEVDLSAAAEDDAEETSDEPAAEDTATEDEAAKA).

It belongs to the FKBP-type PPIase family. Tig subfamily.

The protein localises to the cytoplasm. The catalysed reaction is [protein]-peptidylproline (omega=180) = [protein]-peptidylproline (omega=0). In terms of biological role, involved in protein export. Acts as a chaperone by maintaining the newly synthesized protein in an open conformation. Functions as a peptidyl-prolyl cis-trans isomerase. The polypeptide is Trigger factor (Beutenbergia cavernae (strain ATCC BAA-8 / DSM 12333 / CCUG 43141 / JCM 11478 / NBRC 16432 / NCIMB 13614 / HKI 0122)).